The chain runs to 132 residues: uncharacterized protein (132 aa).

This is an uncharacterized protein from Acanthamoeba polyphaga (Amoeba).